An 84-amino-acid chain; its full sequence is Turripeptide IX-03 (84 aa).

A signal peptide spans 1–21; it reads MGFYMLLTVALLLTSLMNVEA. The propeptide occupies 22–39; the sequence is TPVDQAERSALEKSGLGN. Cystine bridges form between C48/C70, C55/C74, and C60/C81.

As to expression, expressed by the venom duct.

It localises to the secreted. In Gemmula speciosa (Splendid gem-turris), this protein is Turripeptide IX-03.